The chain runs to 423 residues: MSYVIDRRLNGKNKSTVNRQRFLRRYRDHIKKAVEEAVSRRSITDMEHGEQISIPGRDIDEPVLHHGRGGKQTVVHPGNKEFTTGEHIQRPQGGGGGKGPGKAGNSGEGMDEFVFQITQEEFLEFMFEDLELPNLVKRNLTGTDTFKTVRAGISNEGNPSRINIIRTLRSAHARRIALSGSSRAKLRDAKEELARLKREEPDNFGDIQEIEAEIEKLSARIHRVPFLDTFDLKYNLLVKQPNPSSKAVMFCLMDVSGSMTQATKDIAKRFFILLYLFLKRNYDKIDVVFIRHHTSAREVDEEEFFYSRETGGTIVSSALKLMQEIMAERYPANEWNIYAAQASDGDNWNDDSPICRDILINQIMPFVQYYTYVEITPREHQALWFEYERIGEAFADTFAQQQLVSAGDIYPVFRELFQRRLVT.

The disordered stretch occupies residues L64–G109. Over residues Q92 to G107 the composition is skewed to gly residues.

Belongs to the UPF0229 family.

The protein is UPF0229 protein PFLU_5583 of Pseudomonas fluorescens (strain SBW25).